Here is a 619-residue protein sequence, read N- to C-terminus: Chaperone protein HscA homolog (619 aa).

This sequence belongs to the heat shock protein 70 family.

Chaperone involved in the maturation of iron-sulfur cluster-containing proteins. Has a low intrinsic ATPase activity which is markedly stimulated by HscB. In Acinetobacter baumannii (strain AB0057), this protein is Chaperone protein HscA homolog.